The chain runs to 203 residues: 8-oxoguanine DNA glycosylase/AP lyase (203 aa).

Active-site residues include Lys128 and Asp146.

Belongs to the type-2 OGG1 family.

It carries out the reaction 2'-deoxyribonucleotide-(2'-deoxyribose 5'-phosphate)-2'-deoxyribonucleotide-DNA = a 3'-end 2'-deoxyribonucleotide-(2,3-dehydro-2,3-deoxyribose 5'-phosphate)-DNA + a 5'-end 5'-phospho-2'-deoxyribonucleoside-DNA + H(+). Its function is as follows. Catalyzes the excision of an oxidatively damaged form of guanine (7,8-dihydro-8-oxoguanine = 8-oxoG) from DNA. Also cleaves the DNA backbone at apurinic/apyrimidinic sites (AP sites). The protein is 8-oxoguanine DNA glycosylase/AP lyase of Sulfolobus acidocaldarius (strain ATCC 33909 / DSM 639 / JCM 8929 / NBRC 15157 / NCIMB 11770).